The following is a 325-amino-acid chain: MNKFKNIAVYGGGSFGTSLASLAAQNCNNVTLFLRDEAIAKEILHNKTNVKYLGDIKLPAHLQATTNLDIIKDFELIIIALPSYAFDDSIKLLKTHSISKDNTLLIATKGFARNPTALLSDRLKTLLPYNPTAFFVGPNLAKELAKNLPASASIASLDIDIANKIAYNLSSKIFTTNVSSDIVTLQVAGALKNIFAIKSGIDLARKQGENARATLIVAALKEIAILSKALGGMQKNSDILLEGVVGDLVLTCYSLGSRNTKFGYELGISSDKKKFLQEYKELAEGREALKLVLDLIKKYNLHMPIISEVASCVIPYVIPAKAGMT.

The NADPH site is built by serine 14, phenylalanine 15, arginine 35, and lysine 109. 2 residues coordinate sn-glycerol 3-phosphate: lysine 109 and glycine 137. Alanine 141 is a binding site for NADPH. Sn-glycerol 3-phosphate-binding residues include lysine 192, aspartate 247, serine 257, arginine 258, and asparagine 259. Lysine 192 (proton acceptor) is an active-site residue. Arginine 258 serves as a coordination point for NADPH. NADPH is bound by residues leucine 282 and glutamate 284.

The protein belongs to the NAD-dependent glycerol-3-phosphate dehydrogenase family.

The protein localises to the cytoplasm. It carries out the reaction sn-glycerol 3-phosphate + NAD(+) = dihydroxyacetone phosphate + NADH + H(+). The enzyme catalyses sn-glycerol 3-phosphate + NADP(+) = dihydroxyacetone phosphate + NADPH + H(+). Its pathway is membrane lipid metabolism; glycerophospholipid metabolism. In terms of biological role, catalyzes the reduction of the glycolytic intermediate dihydroxyacetone phosphate (DHAP) to sn-glycerol 3-phosphate (G3P), the key precursor for phospholipid synthesis. This is Glycerol-3-phosphate dehydrogenase [NAD(P)+] from Rickettsia conorii (strain ATCC VR-613 / Malish 7).